The primary structure comprises 253 residues: CD151 antigen (253 aa).

Residues 1-18 (MGEFNEKKTTCGTVCLKY) lie on the Cytoplasmic side of the membrane. S-palmitoyl cysteine attachment occurs at residues cysteine 11 and cysteine 15. Residues 19-39 (LLFTYNCCFWLAGLAVMAVGI) form a helical membrane-spanning segment. Residues 40–57 (WTLALKSDYISLLASGTY) are Extracellular-facing. A helical membrane pass occupies residues 58 to 78 (LATAYILVVAGAVVMVTGVLG). Over 79–91 (CCATFKERRNLLR) the chain is Cytoplasmic. A helical membrane pass occupies residues 92-112 (LYFILLLIIFLLEIIAGVLAY). At 113–221 (VYYQQLNTEL…LETFIQEHLR (109 aa)) the chain is on the extracellular side. The N-linked (GlcNAc...) asparagine glycan is linked to asparagine 159. The helical transmembrane segment at 222–242 (VIGAVGTGIACVQVFGMIFTC) threads the bilayer. Residues cysteine 242 and cysteine 243 are each lipidated (S-palmitoyl cysteine). Residues 243 to 253 (CLYRSLKLEHY) are Cytoplasmic-facing.

Belongs to the tetraspanin (TM4SF) family. Interacts with integrins ITGA3:ITGB1, ITGA5:ITGB1, ITGA3:ITGB1 and ITGA6:ITGB4 and with CD9 and CD181. Interacts (via the second extracellular domain) with integrin ITGAV:ITGB3. Interacts with ITGA3; this interaction modulates ITGA3 glycosylation pattern. Interacts with F11R. Interacts with RAC1 and CDC42; these interactions mediate physical association of RAC1 and CDC42 with integrin adhesion receptor complexes. In terms of processing, palmitoylated. Palmitoylation by ZDHHC2 regulates CD151 expression, association with other tetraspanin family proteins and function in cell adhesion. Ubiquitinated by RNF128 on lysine residues present in the tetraspanin amino terminus via 'Lys-48'-linked ubiquitin leading to proteasomal degradation.

Its subcellular location is the cell membrane. In terms of biological role, structural component of specialized membrane microdomains known as tetraspanin-enriched microdomains (TERMs), which act as platforms for receptor clustering and signaling. Plays a role in various cellular and molecular mechanism through its association with both integrin and non-integrin proteins. These interactions facilitate critical cellular functions, including cell-to-cell communication, wound healing, platelet aggregation, trafficking, cell motility, and angiogenesis. Via interaction with JAM-A/F11R and integrin ITGA3:ITGB1, promotes the recruitment of signaling molecules such as RAC1, CDC42 and RhoGTPases to facilitate the polarization of epithelial cells and the reorganization of the actin cytoskeleton, which are critical steps in cell migration process. Regulates the glycosylation pattern of ITGA3:ITGB1 thereby modulating its activity. Plays an essential role in the maintenance of central laminin-binding integrin ITGA6:ITGB4-containing adhesion complexes. Essential for the proper assembly of the glomerular and tubular basement membranes in kidney. Contributes to T-cell activation by modulating integrin signaling leading to activation of downstream targets PTK2 and MAPK1/MAPK3. The protein is CD151 antigen (CD151) of Chlorocebus aethiops (Green monkey).